Here is a 262-residue protein sequence, read N- to C-terminus: Acyl-[acyl-carrier-protein]--UDP-N-acetylglucosamine O-acyltransferase (262 aa).

Belongs to the transferase hexapeptide repeat family. LpxA subfamily. As to quaternary structure, homotrimer.

It localises to the cytoplasm. The enzyme catalyses a (3R)-hydroxyacyl-[ACP] + UDP-N-acetyl-alpha-D-glucosamine = a UDP-3-O-[(3R)-3-hydroxyacyl]-N-acetyl-alpha-D-glucosamine + holo-[ACP]. It functions in the pathway glycolipid biosynthesis; lipid IV(A) biosynthesis; lipid IV(A) from (3R)-3-hydroxytetradecanoyl-[acyl-carrier-protein] and UDP-N-acetyl-alpha-D-glucosamine: step 1/6. Its function is as follows. Involved in the biosynthesis of lipid A, a phosphorylated glycolipid that anchors the lipopolysaccharide to the outer membrane of the cell. The protein is Acyl-[acyl-carrier-protein]--UDP-N-acetylglucosamine O-acyltransferase of Yersinia enterocolitica.